Consider the following 5207-residue polypeptide: E3 ubiquitin-protein ligase RNF213 (5207 aa).

2 disordered regions span residues 1–20 (MECP…FCSQ) and 27–365 (PAAP…EADV). Residues 34-43 (SENNNSTMAS) are compositionally biased toward polar residues. Over residues 89 to 100 (KKKKRKKKKKGN) the composition is skewed to basic residues. Low complexity-rich tracts occupy residues 101–117 (KSAS…PASP) and 136–157 (SQAQ…ATTP). Polar residues predominate over residues 188 to 197 (SEAQSSPQFQ). A phosphoserine mark is found at Ser208 and Ser217. Residues 248 to 266 (GGSSEPGTELQTTEQQAGA) show a composition bias toward polar residues. Composition is skewed to basic and acidic residues over residues 285-294 (AGKEMKEKTQ), 309-346 (HCQE…EGKN), and 353-362 (KNEKEQKNQE). The stretch at 343-374 (EGKNRSAAAVKNEKEQKNQEADVQEVKASTLS) forms a coiled coil. A Glycyl lysine isopeptide (Lys-Gly) (interchain with G-Cter in SUMO2) cross-link involves residue Lys1151. A Phosphoserine modification is found at Ser1258. Residues 1995-2000 (GVGKSL), Glu2098, Asp2155, and Arg2216 contribute to the ATP site. Ser2273 bears the Phosphoserine mark. ATP is bound by residues Lys2499 and Ser2574. Zn(2+) is bound by residues Cys3997, Cys4000, Cys4012, His4014, Cys4017, Cys4020, Cys4032, Cys4035, Cys4505, and His4509. The RING-type zinc-finger motif lies at 3997–4036 (CSICLGDAKDPVCLPCDHVHCLRCLRAWFASEQMICPYCL). An RZ-type zinc finger spans residues 4483 to 4555 (MPEDLLAQAR…VKDKADRTQT (73 aa)). Cys4516 acts as the Nucleophile; for E3 ubiquitin-lipopolysaccharide ligase activity in catalysis. Zn(2+)-binding residues include Cys4525 and Cys4528.

The protein belongs to the AAA ATPase family. Monomer. Interacts with UBE2L3/UBCH7; UBE2L3/UBCH7 is the most efficient ubiquitin-conjugating enzyme E2 for the ubiquitin ligase activity. Interacts with UBE2N/UBC13; promoting 'Lys-63'-linked ubiquitination of target proteins. In terms of assembly, (Microbial infection) Interacts with M.tuberculosis protein Rv3655c, which impairs caspase-8 activation and suppresses macrophage apoptosis by blocking the extrinsic pathway. Post-translationally, autoubiquitinated. As to expression, widely expressed (at protein level). In terms of tissue distribution, major isoform detected in all tissues examined. Minor isoform with restricted expression.

It is found in the cytoplasm. The protein localises to the cytosol. Its subcellular location is the lipid droplet. The catalysed reaction is S-ubiquitinyl-[E2 ubiquitin-conjugating enzyme]-L-cysteine + [acceptor protein]-L-lysine = [E2 ubiquitin-conjugating enzyme]-L-cysteine + N(6)-ubiquitinyl-[acceptor protein]-L-lysine.. It catalyses the reaction ATP + H2O = ADP + phosphate + H(+). It participates in protein modification; protein ubiquitination. Atypical E3 ubiquitin ligase that can catalyze ubiquitination of both proteins and lipids, and which is involved in various processes, such as lipid metabolism, angiogenesis and cell-autonomous immunity. Acts as a key immune sensor by catalyzing ubiquitination of the lipid A moiety of bacterial lipopolysaccharide (LPS) via its RZ-type zinc-finger: restricts the proliferation of cytosolic bacteria, such as Salmonella, by generating the bacterial ubiquitin coat through the ubiquitination of LPS. Also acts indirectly by mediating the recruitment of the LUBAC complex, which conjugates linear polyubiquitin chains. Ubiquitination of LPS triggers cell-autonomous immunity, such as antibacterial autophagy, leading to degradation of the microbial invader. Involved in lipid metabolism by regulating fat storage and lipid droplet formation; act by inhibiting the lipolytic process. Also regulates lipotoxicity by inhibiting desaturation of fatty acids. Also acts as an E3 ubiquitin-protein ligase via its RING-type zinc finger: mediates 'Lys-63'-linked ubiquitination of target proteins. Involved in the non-canonical Wnt signaling pathway in vascular development: acts by mediating ubiquitination and degradation of FLNA and NFATC2 downstream of RSPO3, leading to inhibit the non-canonical Wnt signaling pathway and promoting vessel regression. Also has ATPase activity; ATPase activity is required for ubiquitination of LPS. This is E3 ubiquitin-protein ligase RNF213 from Homo sapiens (Human).